Reading from the N-terminus, the 273-residue chain is Proteasome subunit beta type-10 (273 aa).

Met-1 bears the N-acetylmethionine mark. Positions 1-39 (MLKQAVEPTGGFSFENCQRNASLEHVLPGLRVPHARKTG) are cleaved as a propeptide — removed in mature form. Thr-40 (nucleophile) is an active-site residue.

Belongs to the peptidase T1B family. As to quaternary structure, the 26S proteasome consists of a 20S proteasome core and two 19S regulatory subunits. The 20S proteasome core is composed of 28 subunits that are arranged in four stacked rings, resulting in a barrel-shaped structure. The two end rings are each formed by seven alpha subunits, and the two central rings are each formed by seven beta subunits. The catalytic chamber with the active sites is on the inside of the barrel. Component of the immunoproteasome, where it displaces the equivalent housekeeping subunit PSMB7. Component of the spermatoproteasome, a form of the proteasome specifically found in testis. Autocleaved. The resulting N-terminal Thr residue of the mature subunit is responsible for the nucleophile proteolytic activity. In terms of tissue distribution, detected in liver (at protein level).

The protein localises to the cytoplasm. The protein resides in the nucleus. The catalysed reaction is Cleavage of peptide bonds with very broad specificity.. In terms of biological role, the proteasome is a multicatalytic proteinase complex which is characterized by its ability to cleave peptides with Arg, Phe, Tyr, Leu, and Glu adjacent to the leaving group at neutral or slightly basic pH. The proteasome has an ATP-dependent proteolytic activity. This subunit is involved in antigen processing to generate class I binding peptides. Plays a role in determining the T-cell repertoire for an antiviral T-cell response. This chain is Proteasome subunit beta type-10 (Psmb10), found in Mus musculus (Mouse).